Here is a 520-residue protein sequence, read N- to C-terminus: FAD-linked oxidoreductase OXR2 (520 aa).

An N-terminal signal peptide occupies residues 1-23 (MKSFSLLASAGLATLASLPLTMA). N-linked (GlcNAc...) asparagine glycans are attached at residues Asn77, Asn220, Asn378, and Asn390. Positions 79 to 251 (SRPTIRLVVV…TSFQSKIYPR (173 aa)) constitute an FAD-binding PCMH-type domain.

The protein belongs to the oxygen-dependent FAD-linked oxidoreductase family. It depends on FAD as a cofactor.

The protein operates within polyketide biosynthesis. Functionally, FAD-linked oxidoreductase; part of the gene cluster that mediates the biosynthesis of pyriculol and pyriculariol, two heptaketides that induce lesion formation upon application on rice leaves but are dispensable for pathogenicity. The highly reducing polyketide synthase synthesizes the heptaketide backbone of pyriculol and pyriculariol. Pyriculol and pyriculariol contain several hydroxyl moieties and double bonds, so it can be assumed that several reduction steps occur during biosynthesis. These reactions could be executed by PKS19 itself or partly by the tailoring enzymes OXR1, OXR2, RED1, RED2 or RED3, identified within the cluster. The FAD-linked oxidoreductase OXR1 is the only tailoring enzyme for which the function has been determined yet, and is involved in the oxidation of dihydropyriculol and dihydropyriculariol into pyriculol and pyriculariol, respectively. This is FAD-linked oxidoreductase OXR2 from Pyricularia oryzae (strain 70-15 / ATCC MYA-4617 / FGSC 8958) (Rice blast fungus).